Here is a 371-residue protein sequence, read N- to C-terminus: Cytochrome b (371 aa).

Helical transmembrane passes span 25 to 45 (FGSM…FLAI), 69 to 90 (WMMQ…YIHI), 105 to 125 (WMSG…GYVL), and 170 to 190 (FFAL…LHII). Residues His75 and His89 each coordinate heme b. Residues His174 and His188 each contribute to the heme b site. His193 contributes to the a ubiquinone binding site. The next 4 membrane-spanning stretches (helical) occupy residues 218-238 (HKDL…VSFL), 280-300 (LGGA…PFTH), 312-332 (LSQL…WAAT), and 339-358 (FIII…LSTP).

The protein belongs to the cytochrome b family. In terms of assembly, the cytochrome bc1 complex contains 3 respiratory subunits (MT-CYB, CYC1 and UQCRFS1), 2 core proteins (UQCRC1 and UQCRC2) and probably 6 low-molecular weight proteins. Requires heme b as cofactor.

Its subcellular location is the mitochondrion inner membrane. In terms of biological role, component of the ubiquinol-cytochrome c reductase complex (complex III or cytochrome b-c1 complex) that is part of the mitochondrial respiratory chain. The b-c1 complex mediates electron transfer from ubiquinol to cytochrome c. Contributes to the generation of a proton gradient across the mitochondrial membrane that is then used for ATP synthesis. The sequence is that of Cytochrome b (MT-CYB) from Antaresia maculosa (Eastern small blotched python).